The chain runs to 256 residues: 3-deoxy-manno-octulosonate cytidylyltransferase (256 aa).

It belongs to the KdsB family.

Its subcellular location is the cytoplasm. The enzyme catalyses 3-deoxy-alpha-D-manno-oct-2-ulosonate + CTP = CMP-3-deoxy-beta-D-manno-octulosonate + diphosphate. Its pathway is nucleotide-sugar biosynthesis; CMP-3-deoxy-D-manno-octulosonate biosynthesis; CMP-3-deoxy-D-manno-octulosonate from 3-deoxy-D-manno-octulosonate and CTP: step 1/1. It participates in bacterial outer membrane biogenesis; lipopolysaccharide biosynthesis. Its function is as follows. Activates KDO (a required 8-carbon sugar) for incorporation into bacterial lipopolysaccharide in Gram-negative bacteria. This is 3-deoxy-manno-octulosonate cytidylyltransferase from Histophilus somni (strain 2336) (Haemophilus somnus).